The following is a 609-amino-acid chain: Kelch-like protein 20 (609 aa).

Residues 68–135 (CDVVLVVGAK…AYTSQITVEE (68 aa)) form the BTB domain. Positions 170-272 (CLGIRAFADT…SPKFLVGTVG (103 aa)) constitute a BACK domain. Kelch repeat units follow at residues 319 to 365 (VLFA…VLDD), 367 to 413 (LYAV…VLGG), 414 to 460 (FLYA…VLGG), 462 to 507 (LYAV…VYQD), 509 to 554 (IYAV…VVNG), and 556 to 601 (LMAV…VIKM).

Component of the BCR(KLHL20) E3 ubiquitin ligase complex, at least composed of CUL3, KLHL20 and RBX1. Interacts with PDZ-RhoGEF/ARHGEF11, DAPK1, PML and CORO7. Interacts with F-actin. Interacts with IFN-gamma (IFNG). Interacts (via kelch repeats) with IVNS1ABP (via kelch repeats); this interaction blocks the assembly of CUL3-KLHL20 complex.

It is found in the cytoplasm. It localises to the perinuclear region. The protein localises to the nucleus. Its subcellular location is the golgi apparatus. The protein resides in the trans-Golgi network. It is found in the cell projection. It localises to the axon. The protein localises to the dendrite. It functions in the pathway protein modification; protein ubiquitination. Its function is as follows. Substrate-specific adapter of a BCR (BTB-CUL3-RBX1) E3 ubiquitin-protein ligase complex involved in interferon response and anterograde Golgi to endosome transport. The BCR(KLHL20) E3 ubiquitin ligase complex mediates the ubiquitination of DAPK1, leading to its degradation by the proteasome, thereby acting as a negative regulator of apoptosis. The BCR(KLHL20) E3 ubiquitin ligase complex also specifically mediates 'Lys-33'-linked ubiquitination. Involved in anterograde Golgi to endosome transport by mediating 'Lys-33'-linked ubiquitination of CORO7, promoting interaction between CORO7 and EPS15, thereby facilitating actin polymerization and post-Golgi trafficking. Also acts as a regulator of endothelial migration during angiogenesis by controlling the activation of Rho GTPases. The BCR(KLHL20) E3 ubiquitin ligase complex acts as a regulator of neurite outgrowth by mediating ubiquitination and degradation of PDZ-RhoGEF/ARHGEF11. This chain is Kelch-like protein 20 (KLHL20), found in Bos taurus (Bovine).